Consider the following 294-residue polypeptide: Zinc finger protein 346 (294 aa).

Met-1 carries the N-acetylmethionine modification. Low complexity predominate over residues 1–19; the sequence is MECPAPDATDAADPGEAGP. Residues 1–35 are disordered; that stretch reads MECPAPDATDAADPGEAGPYKGSEEPEGREPDGVR. A compositionally biased stretch (basic and acidic residues) spans 22–35; it reads GSEEPEGREPDGVR. The segment at 70-104 adopts a Matrin-type 1 zinc-finger fold; that stretch reads FTSTQCKVCCAMLISESQKLAHYQSKKHANKVKRY. Positions 75, 78, 91, and 97 each coordinate Zn(2+). Lys-114 is covalently cross-linked (Glycyl lysine isopeptide (Lys-Gly) (interchain with G-Cter in SUMO2)). The Matrin-type 2 zinc finger occupies 131 to 165; that stretch reads DKNHCCPICNMTFSSPAVAQSHYLGKTHAKSLKLK. Positions 136, 139, 152, and 158 each coordinate Zn(2+). Lys-170 is covalently cross-linked (Glycyl lysine isopeptide (Lys-Gly) (interchain with G-Cter in SUMO2)). 2 consecutive Matrin-type zinc fingers follow at residues 182 to 216 and 236 to 270; these read DPDK…ETKL and GKGY…SPKT. Positions 269–294 are disordered; the sequence is KTLVTLGSQTPVQTQPTPKDSSTVQD.

As to quaternary structure, forms a heteromeric complex with XPO5 and ILF3. Found in a nuclear export complex with XPO5, RAN, ILF3, ZNF346 and double-stranded RNA. Interacts with XPO5. Interacts with ILF3 in an RNA-independent manner. Expressed in all tissues tested, including heart, brain, spleen, lung, liver, muscle, kidney and testis. Exogenous expression induced apoptosis.

It localises to the nucleus. It is found in the nucleolus. The protein resides in the cytoplasm. Functionally, binds with low affinity to dsDNA and ssRNA, and with high affinity to dsRNA, with no detectable sequence specificity. May bind to specific miRNA hairpins. In Mus musculus (Mouse), this protein is Zinc finger protein 346 (Znf346).